Consider the following 431-residue polypeptide: Transposase for insertion sequence element IS232 (431 aa).

In terms of domain architecture, HTH IS21-type spans proline 20–leucine 79. Residues lysine 35–asparagine 54 constitute a DNA-binding region (H-T-H motif). The Integrase catalytic domain occupies tyrosine 140–lysine 315.

This sequence belongs to the transposase IS21/IS408/IS1162 family.

Involved in the transposition of the insertion sequence. The protein is Transposase for insertion sequence element IS232 of Bacillus thuringiensis subsp. berliner.